The primary structure comprises 259 residues: Phosphate import ATP-binding protein PstB (259 aa).

In terms of domain architecture, ABC transporter spans 10 to 254 (AESRNLSFYY…PSRKETEDYI (245 aa)). An ATP-binding site is contributed by 43–50 (GPSGCGKS).

The protein belongs to the ABC transporter superfamily. Phosphate importer (TC 3.A.1.7) family. As to quaternary structure, the complex is composed of two ATP-binding proteins (PstB), two transmembrane proteins (PstC and PstA) and a solute-binding protein (PstS).

Its subcellular location is the cell inner membrane. The catalysed reaction is phosphate(out) + ATP + H2O = ADP + 2 phosphate(in) + H(+). Part of the ABC transporter complex PstSACB involved in phosphate import. Responsible for energy coupling to the transport system. The chain is Phosphate import ATP-binding protein PstB from Methylobacillus flagellatus (strain ATCC 51484 / DSM 6875 / VKM B-1610 / KT).